The chain runs to 233 residues: uncharacterized protein (233 aa).

Positions M1–P23 are cleaved as a signal peptide. The segment at L42 to C217 is disordered. The segment covering N45–P64 has biased composition (low complexity). Residues H65–H211 show a composition bias toward basic residues.

The protein localises to the secreted. This is an uncharacterized protein from Dictyostelium discoideum (Social amoeba).